A 184-amino-acid chain; its full sequence is Inactive cytochrome P450 monooxygenase lolP2 (184 aa).

The chain crosses the membrane as a helical span at residues 10-30; the sequence is GIVWLTVAAIAISYILQSSFL. The disordered stretch occupies residues 161–184; that stretch reads RRTRGSRPRSRPRWMPARWSRSSP. The segment covering 163–172 has biased composition (basic residues); the sequence is TRGSRPRSRP. Residues 173–184 are compositionally biased toward low complexity; that stretch reads RWMPARWSRSSP.

Belongs to the cytochrome P450 family.

It is found in the membrane. In terms of biological role, cytochrome P450 monooxygenase; part of the gene cluster that mediates the biosynthesis of loline alkaloids, potent insecticidal agents composed of a pyrrolizidine ring system and an uncommon ether bridge linking carbons 2 and 7. Lolines are structurally differentiated by the various modifications of the L-amino group and include norloline, loline, N-methylloline, N-acetylloline, N-acetylnorloline, and N-formylloline. The first committed step is the condensation of O-acetyl-L-homoserine (derived from L-aspartic acid) and L-proline, probably catalyzed by the gamma-type pyridoxal 5'-phosphate(PLP)-dependent enzyme lolC, to give the diamino diacid, NACPP. Ensuing cyclization, decarboxylation, and acetylation steps yield 1-exo-acetamidopyrrolizidine (AcAP). LolO is required for installation of the ether bridge upon the pathway intermediate, 1-exo-acetamidopyrrolizidine (AcAP). In sequential 2-oxoglutarate- and O(2)-consuming steps, lolO removes hydrogens from C2 and C7 of AcAP to form both carbon-oxygen bonds in N-acetylnorloline (NANL), the precursor to all other lolines. The enzymes lolD, lolE, lolF and lolT have also been proposed to be involved in the ether-bridge installation. Further processing of the exocyclic moiety of NANL by fungal N-acetamidase (LolN), methyltransferase (LolM), and cytochrome P450 (LolP) enzymes, with occasional involvement of a plant acetyltransferase, generates the other known lolines. LolN transforms NANL to norlonine which is monomethylated and dimethylated to respectively lonine and N-methyllonine (NML) by lolM. LolP catalyzes hydroxylation of the methyl group in N-methylloline (NML) and further oxygenation to N-formylloline (NFL). A plant acetyltransferase is responsible for the acetylation of loline to form N-acetylloline (NAL). LolA might interact with aspartate kinase to prevent feedback inhibition of its activity by these end products and thereby promote production of L-homoserine from L-aspartate. This Epichloe uncinata (Endophyte fungus) protein is Inactive cytochrome P450 monooxygenase lolP2.